The following is a 136-amino-acid chain: Large ribosomal subunit protein eL27 (136 aa).

The KOW domain occupies 5 to 40; the sequence is MKPGKVVLVLAGRYSGRKAVIVKNIDDGTSDRPYSH. N6-acetyllysine occurs at positions 27 and 93.

Belongs to the eukaryotic ribosomal protein eL27 family. In terms of assembly, component of the large ribosomal subunit. Interacts with RRP1B. Component of the large ribosomal subunit. Interacts with RRP1B. Interacts with DHX33.

The protein resides in the cytoplasm. Its subcellular location is the cytosol. It is found in the rough endoplasmic reticulum. Functionally, component of the large ribosomal subunit. Required for proper rRNA processing and maturation of 28S and 5.8S rRNAs. This chain is Large ribosomal subunit protein eL27 (RPL27), found in Bos taurus (Bovine).